The sequence spans 103 residues: Major carboxysome shell protein CsoS1 (103 aa).

In terms of domain architecture, BMC spans 9–94 (ALGMIETRGL…PHREVEPALG (86 aa)).

The protein belongs to the bacterial microcompartments protein family. CsoS1 subfamily. As to quaternary structure, homohexamer with a small central pore. A CsoS1-CsoS1D-CsoS2 complex can be isolated following expression in E.coli. Forms a CsoS2-CsoS1-RuBisCO complex.

The protein localises to the carboxysome. Functionally, the major shell protein of the carboxysome, a polyhedral inclusion where RuBisCO (ribulose bisphosphate carboxylase, ccbL-ccbS) is sequestered. Assembles into hexamers which make sheets that form the facets of the polyhedral carboxysome. There are estimated to be 538 CsoS1 hexamers per carboxysome; note this number includes the probable carboxysome shell vertex proteins CsoS4A and CsoS4B. The sequence is that of Major carboxysome shell protein CsoS1 from Prochlorococcus marinus subsp. pastoris (strain CCMP1986 / NIES-2087 / MED4).